The primary structure comprises 850 residues: Rho guanine nucleotide exchange factor 33 (850 aa).

Basic and acidic residues-rich tracts occupy residues 1–13 (MEKSKAKQGENEH) and 98–113 (EEMQQKIEQLQQEKRR). Disordered stretches follow at residues 1 to 21 (MEKSKAKQGENEHMPVNNPST) and 98 to 209 (EEMQ…DENL). The stretch at 54–128 (LEEKVKSCRC…KAKKAQKEEH (75 aa)) forms a coiled coil. A compositionally biased stretch (low complexity) spans 130 to 149 (AQAGPASAPAPGSAPTQGSP). Over residues 164 to 175 (DFTNMLPSQNYE) the composition is skewed to polar residues. A DH domain is found at 273-448 (KRQTVALELL…RVFISHYTLL (176 aa)). Disordered stretches follow at residues 504–550 (EMLQ…WELE) and 702–850 (AAQA…WGWW). 2 stretches are compositionally biased toward low complexity: residues 510-520 (PSSSSSAPAVS) and 754-770 (APHGPAAAAAASRGAPR). Residue R766 is modified to Omega-N-methylarginine. Polar residues predominate over residues 773–783 (FPQQRSQSEKQ). Over residues 784–806 (TYLEEMHLEDATRFCPKEERESE) the composition is skewed to basic and acidic residues. The span at 826–835 (SFRKLFKKKN) shows a compositional bias: basic residues.

The sequence is that of Rho guanine nucleotide exchange factor 33 (Arhgef33) from Mus musculus (Mouse).